We begin with the raw amino-acid sequence, 312 residues long: Taste receptor type 2 member 9 (312 aa).

Residues 1–9 (MPSAIEAIY) are Extracellular-facing. The chain crosses the membrane as a helical span at residues 10-32 (IILIAGELTIGIWGNGFIVLVNC). Topologically, residues 33–52 (IDWLKRRDVSLIDIILISLA) are cytoplasmic. A helical transmembrane segment spans residues 53 to 72 (ISRICLLXVISLDGFFMLLF). The Extracellular segment spans residues 73–86 (PTTYGNSVLVSIVB). The helical transmembrane segment at 87-109 (IVWTFANNSSLWFTSCLSIFYLL) threads the bilayer. Residues 110–128 (KIANISHPFFFWLKLKINK) are Cytoplasmic-facing. A helical membrane pass occupies residues 129 to 146 (VILAILLGSFLISLVISV). Topologically, residues 147 to 180 (XMNDDMWYHLFKVSHEENITWEFKVSKIPGTFKQ) are extracellular. The N-linked (GlcNAc...) asparagine glycan is linked to asparagine 164. The helical transmembrane segment at 181–203 (LTLNLGAMVPFILCLISFSLLLF) threads the bilayer. Residues 204–234 (SLVRHTKQIQLXATGFRDPSTEAHMRAIKAV) lie on the Cytoplasmic side of the membrane. Residues 235 to 257 (IIFLLLLIVYYPVFLVMTSSALI) form a helical membrane-spanning segment. At 258-261 (PQGK) the chain is on the extracellular side. The helical transmembrane segment at 262–284 (LVLMIGDIVTITFPSSHSFILIM) threads the bilayer. The Cytoplasmic portion of the chain corresponds to 285–312 (GNSKLREAFLKMLRFVKRFLRRRKPFVP).

Belongs to the G-protein coupled receptor T2R family.

The protein resides in the membrane. Gustducin-coupled receptor implicated in the perception of bitter compounds in the oral cavity and the gastrointestinal tract. Signals through PLCB2 and the calcium-regulated cation channel TRPM5. In Pongo pygmaeus (Bornean orangutan), this protein is Taste receptor type 2 member 9 (TAS2R9).